The following is a 59-amino-acid chain: Metallothionein-1B (59 aa).

A beta region spans residues 1 to 29 (MPGPCCNDKCVCQEGGCKAGCQCTSCRCS). A divalent metal cation contacts are provided by Cys-5, Cys-6, Cys-10, Cys-17, Cys-21, Cys-23, Cys-26, Cys-28, Cys-31, Cys-34, Cys-38, Cys-40, Cys-46, Cys-50, Cys-54, Cys-56, and Cys-57. The interval 30–59 (PCQKCTSGCKCATKEECSKTCTKPCSCCPK) is alpha.

It belongs to the metallothionein superfamily. Type 3 family.

Functionally, binds six divalent metal ions. Known to bind copper and cadmium. The sequence is that of Metallothionein-1B from Callinectes sapidus (Blue crab).